Here is a 656-residue protein sequence, read N- to C-terminus: MGGFPEATGNLLDAAAQEFHPTVCAPYPLQPLPQQLYCPHPYPAMPVPPPPQIAMLQPVPPMAMAMAPQPGYTLPTTTPVVNGPSSRVVVLGLVPPHAQEADVAQAMAPFGAIRSVDACAVASEGVATVHFFDIRAAELALTCVREQHMRQQSRLGQLYAAAAVAPAWAPAPTPQAWDWPHPNDDGRGLVLGHAVWAHFATGADDGDNRGSLVVLSPLPGVSVADLRQVFQAFGDLKDVRESAQRPSHKFVDFFDTRDAARALAELNGQELFGRRLVVEFTRPSGPGPRRRGYAPHQHRPTAPTPPRLQATWRPSQPTSSQPPASSSSSGSVRAREGVVLLRRSSCKSSAGSDQSSKGGNAGTSHERKTKGGKIVVAAAAASSSTPTASGKQTQKGVGSSGGGSWKGRKSGWEARFLFKEPEAGGGADTQATPASEMDTRTTVMIRNIPNKYSQKLLLNMLDNHCIQSNEWIVASGEEQPFSAYDFVYLPIDFNNKCNVGYGFVNLTSPEARVRLYKAFHKQPWEVYNSRKICQVTYARVQGLEALKEHFKNSKFPCDSDEYLPVAFSPARDGKELTDPVPIVGRSPAASSASSPPKSRAASVDRLGQELMPAPSSSADGASSTTTSTHAPSEHDEEEEEGDIRLAGELRRLGYDD.

Residues 211–283 (SLVVLSPLPG…RRLVVEFTRP (73 aa)) enclose the RRM domain. Disordered stretches follow at residues 280 to 408 (FTRP…WKGR) and 576 to 656 (LTDP…GYDD). A compositionally biased stretch (basic residues) spans 288–299 (PRRRGYAPHQHR). Residues 314-331 (PSQPTSSQPPASSSSSGS) are compositionally biased toward low complexity. A compositionally biased stretch (polar residues) spans 346–358 (CKSSAGSDQSSKG). Composition is skewed to low complexity over residues 377–397 (AAAAASSSTPTASGKQTQKGV), 585–601 (RSPAASSASSPPKSRAA), and 612–630 (PAPSSSADGASSTTTSTHA). The segment covering 642–656 (DIRLAGELRRLGYDD) has biased composition (basic and acidic residues).

As to expression, expressed below the shoot tip down the flanks of shoot apex in an alternating pattern. Not expressed in root tips, leaves or immature ears (female inflorescences).

Its function is as follows. Probable RNA-binding protein. Involved in the regulation of leaf initiation rate and shoot development. Seems to act more predominantly in the early stages of the leaf development, rather than in the later phase. This Zea mays (Maize) protein is Protein terminal ear1 (TE1).